A 363-amino-acid polypeptide reads, in one-letter code: MLFNLIAAHDTSHGGFFNLFHYLTFRSGCACLTALVISLALGNPFIAQLKRIQREGQPIRTVGPERHILEKAGTPTMGGMLILIALFSATLLWADLTNGFVWAVMLTTAAFGAVGFADDYLKLSKRNTTGVSKRTRLGCEFLASLIAGIWLQSLTPPELRNMVAFPFVKDVLLPLGYAFPIFAMITITGFGNAVNFTDGLDGLAIVPVVIAALVFALISYLVGNHVFADYLQLHPVPGTGELAVFCAALIGAGLGFLWFNAPPAAVFMGDTGSLSLGGALGAVAVATKHELVLCIVGGVFVAETLSVVIQIFWFKRTGRRVFLMAPLHHHFEKKGWQEPKIVIRFWIVSIVLGLCGLATLKLR.

A run of 10 helical transmembrane segments spans residues 27–47 (SGCA…PFIA), 76–96 (TMGG…WADL), 97–117 (TNGF…VGFA), 137–157 (LGCE…LTPP), 171–191 (VLLP…TGFG), 202–222 (GLAI…SYLV), 242–262 (LAVF…FNAP), 265–285 (AVFM…AVAV), 292–312 (VLCI…IQIF), and 340–360 (KIVI…LATL).

The protein belongs to the glycosyltransferase 4 family. MraY subfamily. The cofactor is Mg(2+).

Its subcellular location is the cell inner membrane. The catalysed reaction is UDP-N-acetyl-alpha-D-muramoyl-L-alanyl-gamma-D-glutamyl-meso-2,6-diaminopimeloyl-D-alanyl-D-alanine + di-trans,octa-cis-undecaprenyl phosphate = di-trans,octa-cis-undecaprenyl diphospho-N-acetyl-alpha-D-muramoyl-L-alanyl-D-glutamyl-meso-2,6-diaminopimeloyl-D-alanyl-D-alanine + UMP. Its pathway is cell wall biogenesis; peptidoglycan biosynthesis. In terms of biological role, catalyzes the initial step of the lipid cycle reactions in the biosynthesis of the cell wall peptidoglycan: transfers peptidoglycan precursor phospho-MurNAc-pentapeptide from UDP-MurNAc-pentapeptide onto the lipid carrier undecaprenyl phosphate, yielding undecaprenyl-pyrophosphoryl-MurNAc-pentapeptide, known as lipid I. The protein is Phospho-N-acetylmuramoyl-pentapeptide-transferase of Gluconobacter oxydans (strain 621H) (Gluconobacter suboxydans).